Consider the following 89-residue polypeptide: Putative membrane protein insertion efficiency factor (89 aa).

The protein belongs to the UPF0161 family.

It localises to the cell inner membrane. Functionally, could be involved in insertion of integral membrane proteins into the membrane. This chain is Putative membrane protein insertion efficiency factor, found in Petrotoga mobilis (strain DSM 10674 / SJ95).